Reading from the N-terminus, the 472-residue chain is 23S rRNA (uracil(1939)-C(5))-methyltransferase RlmD (472 aa).

A compositionally biased stretch (basic residues) spans 1–15 (MSRTAPHRRAPKRYK). The interval 1 to 23 (MSRTAPHRRAPKRYKTPPPAPAH) is disordered. One can recognise a TRAM domain in the interval 23–87 (HVVTGNEPVI…PKFEQAEVVQ (65 aa)). The [4Fe-4S] cluster site is built by C100, C106, C109, and C188. S-adenosyl-L-methionine is bound by residues Q296, F325, N330, E346, N374, and D395. C428 (nucleophile) is an active-site residue.

The protein belongs to the class I-like SAM-binding methyltransferase superfamily. RNA M5U methyltransferase family. RlmD subfamily.

The enzyme catalyses uridine(1939) in 23S rRNA + S-adenosyl-L-methionine = 5-methyluridine(1939) in 23S rRNA + S-adenosyl-L-homocysteine + H(+). In terms of biological role, catalyzes the formation of 5-methyl-uridine at position 1939 (m5U1939) in 23S rRNA. The sequence is that of 23S rRNA (uracil(1939)-C(5))-methyltransferase RlmD from Paraburkholderia xenovorans (strain LB400).